A 299-amino-acid chain; its full sequence is 4-hydroxybenzoate octaprenyltransferase (299 aa).

Transmembrane regions (helical) follow at residues 34-54 (IGSL…ADGL), 57-77 (LWTL…GCVI), 108-128 (LWVF…LNWL), 163-183 (WGIP…GWLL), 221-241 (FDLV…ALVD), 245-265 (DLGA…AYEF), and 277-297 (FRAF…IAVA).

The protein belongs to the UbiA prenyltransferase family. It depends on Mg(2+) as a cofactor.

It is found in the cell inner membrane. It carries out the reaction all-trans-octaprenyl diphosphate + 4-hydroxybenzoate = 4-hydroxy-3-(all-trans-octaprenyl)benzoate + diphosphate. It functions in the pathway cofactor biosynthesis; ubiquinone biosynthesis. Its function is as follows. Catalyzes the prenylation of para-hydroxybenzoate (PHB) with an all-trans polyprenyl group. Mediates the second step in the final reaction sequence of ubiquinone-8 (UQ-8) biosynthesis, which is the condensation of the polyisoprenoid side chain with PHB, generating the first membrane-bound Q intermediate 3-octaprenyl-4-hydroxybenzoate. This chain is 4-hydroxybenzoate octaprenyltransferase, found in Xanthomonas oryzae pv. oryzae (strain MAFF 311018).